Here is a 306-residue protein sequence, read N- to C-terminus: MARYRVHVNDPLDKEATQLLMNKEELEVTSEHLEKDELMKIIPEVDVLVVRSATKVTADIIEAGKNLKIIARAGIGLDNIDVQKAKEKGIKVLNTPGASAPSVAELAMGLMLACARHIARATVSLKEGKWEKKALKGKELLGKTLGLIGFGNIGQEVAKRALAFGMKIIAYDPAKPETDLPVEYVDLDTLFKESDFISLHVPLTESTRHIINRESIAKMKDGVIIVNTARGGTIDEEALYEEVVSGKVYAAGLDVFEVEPPTDEIRRKLLSLDNVVATPHIGASTAEAQRRVGIELVEKIFKELGI.

NAD(+) is bound by residues 152–153 (NI), D172, 228–230 (TAR), and D254. R230 is an active-site residue. Residue E259 is part of the active site. H280 acts as the Proton donor in catalysis. Residue 280 to 283 (HIGA) participates in NAD(+) binding.

The protein belongs to the D-isomer specific 2-hydroxyacid dehydrogenase family.

The enzyme catalyses (R)-glycerate + NAD(+) = 3-hydroxypyruvate + NADH + H(+). It carries out the reaction (R)-glycerate + NADP(+) = 3-hydroxypyruvate + NADPH + H(+). Its function is as follows. Involved in the degradation of L-serine via 3-hydroxypyruvate. Catalyzes the non-reversible reduction of 3-hydroxypyruvate to yield D-glycerate. This is Hydroxypyruvate reductase from Thermotoga maritima (strain ATCC 43589 / DSM 3109 / JCM 10099 / NBRC 100826 / MSB8).